The primary structure comprises 130 residues: Glycine cleavage system H protein (130 aa).

The Lipoyl-binding domain occupies lysine 22–glutamate 103. Lysine 63 is subject to N6-lipoyllysine.

The protein belongs to the GcvH family. In terms of assembly, the glycine cleavage system is composed of four proteins: P, T, L and H. Requires (R)-lipoate as cofactor.

Functionally, the glycine cleavage system catalyzes the degradation of glycine. The H protein shuttles the methylamine group of glycine from the P protein to the T protein. This Clostridium botulinum (strain ATCC 19397 / Type A) protein is Glycine cleavage system H protein.